Here is an 89-residue protein sequence, read N- to C-terminus: Small ribosomal subunit protein uS15 (89 aa).

Belongs to the universal ribosomal protein uS15 family. In terms of assembly, part of the 30S ribosomal subunit. Forms a bridge to the 50S subunit in the 70S ribosome, contacting the 23S rRNA.

One of the primary rRNA binding proteins, it binds directly to 16S rRNA where it helps nucleate assembly of the platform of the 30S subunit by binding and bridging several RNA helices of the 16S rRNA. In terms of biological role, forms an intersubunit bridge (bridge B4) with the 23S rRNA of the 50S subunit in the ribosome. The sequence is that of Small ribosomal subunit protein uS15 from Bordetella parapertussis (strain 12822 / ATCC BAA-587 / NCTC 13253).